Here is a 167-residue protein sequence, read N- to C-terminus: Shikimate kinase (167 aa).

12 to 17 (GSGKTT) contacts ATP. Mg(2+) is bound at residue Thr16. Asp34, Arg58, and Gly80 together coordinate substrate. Arg117 contacts ATP. Arg135 lines the substrate pocket. ATP is bound at residue Arg152.

Belongs to the shikimate kinase family. Monomer. It depends on Mg(2+) as a cofactor.

The protein resides in the cytoplasm. It carries out the reaction shikimate + ATP = 3-phosphoshikimate + ADP + H(+). It participates in metabolic intermediate biosynthesis; chorismate biosynthesis; chorismate from D-erythrose 4-phosphate and phosphoenolpyruvate: step 5/7. Its function is as follows. Catalyzes the specific phosphorylation of the 3-hydroxyl group of shikimic acid using ATP as a cosubstrate. This chain is Shikimate kinase, found in Salinispora tropica (strain ATCC BAA-916 / DSM 44818 / JCM 13857 / NBRC 105044 / CNB-440).